The chain runs to 419 residues: Mitochondrial chaperone BCS1 (419 aa).

Residues 2–15 (PLSDFILALKDNPY) lie on the Mitochondrial intermembrane side of the membrane. A helical membrane pass occupies residues 16–32 (FGAGFGLVGVGTALALA). Topologically, residues 33–419 (RKGVQLGLVA…AIHNAESLRR (387 aa)) are mitochondrial matrix. Phosphotyrosine is present on Y181. An ATP-binding site is contributed by 230 to 237 (GPPGCGKS).

The protein belongs to the AAA ATPase family. BCS1 subfamily. In terms of assembly, interacts with LETM1. In terms of tissue distribution, ubiquitous.

It is found in the mitochondrion inner membrane. The enzyme catalyses ATP + H2O = ADP + phosphate + H(+). Functionally, chaperone necessary for the incorporation of Rieske iron-sulfur protein UQCRFS1 into the mitochondrial respiratory chain complex III. Plays an important role in the maintenance of mitochondrial tubular networks, respiratory chain assembly and formation of the LETM1 complex. The polypeptide is Mitochondrial chaperone BCS1 (BCS1L) (Homo sapiens (Human)).